A 169-amino-acid polypeptide reads, in one-letter code: Adenine phosphoribosyltransferase (169 aa).

This sequence belongs to the purine/pyrimidine phosphoribosyltransferase family. Homodimer.

It is found in the cytoplasm. The catalysed reaction is AMP + diphosphate = 5-phospho-alpha-D-ribose 1-diphosphate + adenine. Its pathway is purine metabolism; AMP biosynthesis via salvage pathway; AMP from adenine: step 1/1. Functionally, catalyzes a salvage reaction resulting in the formation of AMP, that is energically less costly than de novo synthesis. The sequence is that of Adenine phosphoribosyltransferase from Mycoplasmopsis synoviae (strain 53) (Mycoplasma synoviae).